The chain runs to 91 residues: RNA-binding protein Hfq (91 aa).

The Sm domain maps to 9–68 (DPYLNALRRERIPVSIYLVNGIKLQGQIESFDQFVILLKNTVNQMVYKHAISTVVPARSV). The disordered stretch occupies residues 68–91 (VSHHNNNHHTTPTEAVENVETQAE).

The protein belongs to the Hfq family. In terms of assembly, homohexamer.

Its function is as follows. RNA chaperone that binds small regulatory RNA (sRNAs) and mRNAs to facilitate mRNA translational regulation in response to envelope stress, environmental stress and changes in metabolite concentrations. Also binds with high specificity to tRNAs. This is RNA-binding protein Hfq from Haemophilus influenzae (strain 86-028NP).